Reading from the N-terminus, the 426-residue chain is MDERLWEWDFEVAEAIACEERRQSRTIELIASENFTSPAVLAAVGSVLTNKYAEGYPGRRYYGGCECVDRVEELAIQRAKQLFGAPHVNVQPHSGAQANMAAYFAVLQPGDRILGMSLQHGGHLTHGAKVNLSGRWFEVAFYGVDPETERIDYDAVWHIAREIRPKLIISGASAYPRVIDFARLREIADDVGAILMADIAHIAGLVAVGLHPSPIGVAQLVTTTTHKTLRGSRGGMIMCDAEFAEAVDKAVFPGTQGGPLMHVIAGKAVALGEALRPTFRTYIERVLENARVLAETLQAEGFRLVSGGTDNHLLLVDLRSHGLSGRKAERVLDEVGITVNKNTIPNDPKPPTQASGIRLGTPAMTTRGFGPDEMRLTARWIADVLRAPDDESVKARVRAEVAELVSRFPVPGVTIEARTGVDDGTV.

Residues Leu-118 and Gly-122–Leu-124 contribute to the (6S)-5,6,7,8-tetrahydrofolate site. Lys-227 bears the N6-(pyridoxal phosphate)lysine mark. The interval Asn-342–Gly-368 is disordered.

This sequence belongs to the SHMT family. As to quaternary structure, homodimer. Requires pyridoxal 5'-phosphate as cofactor.

It is found in the cytoplasm. The catalysed reaction is (6R)-5,10-methylene-5,6,7,8-tetrahydrofolate + glycine + H2O = (6S)-5,6,7,8-tetrahydrofolate + L-serine. It participates in one-carbon metabolism; tetrahydrofolate interconversion. It functions in the pathway amino-acid biosynthesis; glycine biosynthesis; glycine from L-serine: step 1/1. Functionally, catalyzes the reversible interconversion of serine and glycine with tetrahydrofolate (THF) serving as the one-carbon carrier. This reaction serves as the major source of one-carbon groups required for the biosynthesis of purines, thymidylate, methionine, and other important biomolecules. Also exhibits THF-independent aldolase activity toward beta-hydroxyamino acids, producing glycine and aldehydes, via a retro-aldol mechanism. The protein is Serine hydroxymethyltransferase of Thermomicrobium roseum (strain ATCC 27502 / DSM 5159 / P-2).